The primary structure comprises 258 residues: MSESRTSADGGMETSYGFREVPDGQKQGLVNQVFHKVAKRYDIMNDVMSMGMHRAWKDAMISALNPRKEPGYKVLDVAGGTGDIAFRIVEASGRQAHATVLDINGSMLGVGAERAEKKKLSGNLTFVEANAEELPFEAGSFDAYTIAFGIRNVPRIDAALSEAYRVLKRGGRLLVLEFSEVDMPLLDKIYDAWSFNAIPQFGKAITGDAEPYQYLVESIRKFPNQENFAAMIRQAGFSRVTFTNYTGGIAALHSGWKL.

The tract at residues 1-21 is disordered; that stretch reads MSESRTSADGGMETSYGFREV. S-adenosyl-L-methionine is bound by residues Thr-81, Asp-102, and 130–131; that span reads NA.

This sequence belongs to the class I-like SAM-binding methyltransferase superfamily. MenG/UbiE family.

The catalysed reaction is a 2-demethylmenaquinol + S-adenosyl-L-methionine = a menaquinol + S-adenosyl-L-homocysteine + H(+). It catalyses the reaction a 2-methoxy-6-(all-trans-polyprenyl)benzene-1,4-diol + S-adenosyl-L-methionine = a 5-methoxy-2-methyl-3-(all-trans-polyprenyl)benzene-1,4-diol + S-adenosyl-L-homocysteine + H(+). Its pathway is quinol/quinone metabolism; menaquinone biosynthesis; menaquinol from 1,4-dihydroxy-2-naphthoate: step 2/2. It participates in cofactor biosynthesis; ubiquinone biosynthesis. In terms of biological role, methyltransferase required for the conversion of demethylmenaquinol (DMKH2) to menaquinol (MKH2) and the conversion of 2-polyprenyl-6-methoxy-1,4-benzoquinol (DDMQH2) to 2-polyprenyl-3-methyl-6-methoxy-1,4-benzoquinol (DMQH2). This chain is Ubiquinone/menaquinone biosynthesis C-methyltransferase UbiE, found in Rhizobium johnstonii (strain DSM 114642 / LMG 32736 / 3841) (Rhizobium leguminosarum bv. viciae).